The primary structure comprises 688 residues: Transcription factor GTE9 (688 aa).

Residues 1 to 36 (MTERNGGFPGDYCFEAPGGDYDEGSDSPRVSEGSNC) form a disordered region. The region spanning 132 to 238 (TAVMLLMKQC…KFFEVRWKTL (107 aa)) is the Bromo domain. Residues 280 to 361 (ENVVDPAKRV…EHLREIQNKK (82 aa)) enclose the NET domain. Positions 423–505 (GNSLGSVSGD…AQNEKQLPPE (83 aa)) are disordered. Phosphoserine is present on serine 478. Over residues 491 to 500 (QDGNSAQNEK) the composition is skewed to polar residues. The segment at 505–688 (EKSYRAAILK…EIDIEEGEID (184 aa)) is transcription activation domain. The stretch at 534–613 (TRDPEKLQRE…QSVELNENAK (80 aa)) forms a coiled coil. Residues 660 to 688 (FMKQDEDEEEADPLTSPAPEIDIEEGEID) form a disordered region.

Interacts with BT1.

It localises to the nucleus. This Arabidopsis thaliana (Mouse-ear cress) protein is Transcription factor GTE9 (GTE9).